Reading from the N-terminus, the 557-residue chain is Phosphomethylpyrimidine synthase (557 aa).

Substrate is bound by residues Asn197, Met226, Tyr255, His291, Ser311–Gly313, Asp352–Arg355, and Glu391. Zn(2+) is bound at residue His395. Tyr418 is a binding site for substrate. Zn(2+) is bound at residue His459. [4Fe-4S] cluster is bound by residues Cys539, Cys542, and Cys547.

Belongs to the ThiC family. As to quaternary structure, homodimer. The cofactor is [4Fe-4S] cluster.

It carries out the reaction 5-amino-1-(5-phospho-beta-D-ribosyl)imidazole + S-adenosyl-L-methionine = 4-amino-2-methyl-5-(phosphooxymethyl)pyrimidine + CO + 5'-deoxyadenosine + formate + L-methionine + 3 H(+). The protein operates within cofactor biosynthesis; thiamine diphosphate biosynthesis. Functionally, catalyzes the synthesis of the hydroxymethylpyrimidine phosphate (HMP-P) moiety of thiamine from aminoimidazole ribotide (AIR) in a radical S-adenosyl-L-methionine (SAM)-dependent reaction. In Anaplasma phagocytophilum (strain HZ), this protein is Phosphomethylpyrimidine synthase.